Consider the following 334-residue polypeptide: G-protein coupled receptor 12 (334 aa).

Residues 1-48 (MNEDPKVNLSGLPRDCIEAGTPENISAAVPSQGSVVESEPELVVNPWD) lie on the Extracellular side of the membrane. 2 N-linked (GlcNAc...) asparagine glycosylation sites follow: Asn8 and Asn24. The helical transmembrane segment at 49–69 (IVLCSSGTLICCENAVVVLII) threads the bilayer. At 70-78 (FHSPSLRAP) the chain is on the cytoplasmic side. Residues 79–99 (MFLLIGSLALADLLAGLGLII) traverse the membrane as a helical segment. The Extracellular segment spans residues 100–113 (NFVFAYLLQSEATK). Residues 114-134 (LVTIGLIVASFSASVCSLLAI) traverse the membrane as a helical segment. Topologically, residues 135 to 158 (TVDRYLSLYYALTYHSERTVTFTY) are cytoplasmic. The helical transmembrane segment at 159–179 (VMLVMLWGTSTCLGLLPVMGW) threads the bilayer. Residues 180–199 (NCLRDESTCSVVRPLTKNNA) are Extracellular-facing. Residues 200-220 (AILSISFLFMFALMLQLYIQI) traverse the membrane as a helical segment. Topologically, residues 221–252 (CKIVMRHAHQIALQHHFLATSHYVTTRKGIST) are cytoplasmic. A helical transmembrane segment spans residues 253 to 273 (LALILGTFAACWMPFTLYSLI). Residues 274-282 (ADYTYPSIY) lie on the Extracellular side of the membrane. Residues 283–303 (TYATLLPATYNSIINPVIYAF) traverse the membrane as a helical segment. The Cytoplasmic portion of the chain corresponds to 304–334 (RNQEIQKALCLICCGCIPNTLSQRARSPSDV). Cys317 carries the S-palmitoyl cysteine lipid modification. Phosphoserine is present on residues Ser330 and Ser332.

Belongs to the G-protein coupled receptor 1 family. Expressed in the brain, pituitary gland and testis.

It is found in the cell membrane. In terms of biological role, receptor with constitutive G(s) signaling activity that activates cyclic AMP. Promotes neurite outgrowth and blocks myelin inhibition in neurons. This is G-protein coupled receptor 12 (Gpr12) from Rattus norvegicus (Rat).